Consider the following 456-residue polypeptide: Bifunctional protein GlmU (456 aa).

Positions 1–228 are pyrophosphorylase; it reads MPQNTLNTVI…SHLAAGVNNK (228 aa). UDP-N-acetyl-alpha-D-glucosamine contacts are provided by residues 11–14, Lys25, Gln75, 80–81, 102–104, Gly138, Glu153, Asn168, and Asn226; these read LAAG, GT, and YGD. Asp104 serves as a coordination point for Mg(2+). Asn226 is a Mg(2+) binding site. Residues 229-249 form a linker region; it reads RQLAELERIFQTEQAQELLKA. Residues 250–456 form an N-acetyltransferase region; that stretch reads GVTLRDPARF…GWMRPEKDKQ (207 aa). 2 residues coordinate UDP-N-acetyl-alpha-D-glucosamine: Arg332 and Lys350. Residue His362 is the Proton acceptor of the active site. Residues Tyr365 and Asn376 each coordinate UDP-N-acetyl-alpha-D-glucosamine. Residues Ala379, 385–386, Ser404, Ala422, and Arg439 contribute to the acetyl-CoA site; that span reads NY.

In the N-terminal section; belongs to the N-acetylglucosamine-1-phosphate uridyltransferase family. The protein in the C-terminal section; belongs to the transferase hexapeptide repeat family. In terms of assembly, homotrimer. Mg(2+) is required as a cofactor.

The protein localises to the cytoplasm. It carries out the reaction alpha-D-glucosamine 1-phosphate + acetyl-CoA = N-acetyl-alpha-D-glucosamine 1-phosphate + CoA + H(+). The enzyme catalyses N-acetyl-alpha-D-glucosamine 1-phosphate + UTP + H(+) = UDP-N-acetyl-alpha-D-glucosamine + diphosphate. Its pathway is nucleotide-sugar biosynthesis; UDP-N-acetyl-alpha-D-glucosamine biosynthesis; N-acetyl-alpha-D-glucosamine 1-phosphate from alpha-D-glucosamine 6-phosphate (route II): step 2/2. The protein operates within nucleotide-sugar biosynthesis; UDP-N-acetyl-alpha-D-glucosamine biosynthesis; UDP-N-acetyl-alpha-D-glucosamine from N-acetyl-alpha-D-glucosamine 1-phosphate: step 1/1. It participates in bacterial outer membrane biogenesis; LPS lipid A biosynthesis. In terms of biological role, catalyzes the last two sequential reactions in the de novo biosynthetic pathway for UDP-N-acetylglucosamine (UDP-GlcNAc). The C-terminal domain catalyzes the transfer of acetyl group from acetyl coenzyme A to glucosamine-1-phosphate (GlcN-1-P) to produce N-acetylglucosamine-1-phosphate (GlcNAc-1-P), which is converted into UDP-GlcNAc by the transfer of uridine 5-monophosphate (from uridine 5-triphosphate), a reaction catalyzed by the N-terminal domain. This chain is Bifunctional protein GlmU, found in Neisseria gonorrhoeae (strain ATCC 700825 / FA 1090).